The chain runs to 551 residues: Solute carrier family 22 member 27 (551 aa).

Residues 1–15 are Cytoplasmic-facing; it reads MSFQELLNQVGSLGR. Residues 16–36 traverse the membrane as a helical segment; that stretch reads FQILQIVFLLLLNAIVVPHIA. Topologically, residues 37-145 are extracellular; that stretch reads MENFTAAIPN…DLVCESQALN (109 aa). 5 N-linked (GlcNAc...) asparagine glycosylation sites follow: Asn-39, Asn-56, Asn-62, Asn-102, and Asn-107. A helical transmembrane segment spans residues 146–166; the sequence is SVTKFSFMIGLFIGGIICGHL. At 167–173 the chain is on the cytoplasmic side; sequence SDRLGRK. A helical transmembrane segment spans residues 174–194; that stretch reads FILTCALLQFAITETCVAFAP. The Extracellular portion of the chain corresponds to 195 to 203; it reads SFFIYCSLR. A helical transmembrane segment spans residues 204 to 224; the sequence is FLAGLSVEPILVNSHLLMLEW. Over 225-234 the chain is Cytoplasmic; sequence TSPKFLTMMA. The helical transmembrane segment at 235-255 threads the bilayer; it reads ALLSCAPNIGYMISAGLAFLF. The Extracellular portion of the chain corresponds to 256–258; it reads RIW. A helical transmembrane segment spans residues 259–279; that stretch reads HHLQLTMSVPIFFFLILTRWL. The Cytoplasmic segment spans residues 280–348; the sequence is SESARWLIVT…LFHTSILRKR (69 aa). The helical transmembrane segment at 349-369 threads the bilayer; sequence ICVLSFMRLFFTVSIFGLAVH. Residues 370–376 lie on the Extracellular side of the membrane; the sequence is LQHLSSN. Residues 377-397 traverse the membrane as a helical segment; that stretch reads IILLQFLISALAILVSVIGPF. Over 398–405 the chain is Cytoplasmic; the sequence is VLNHIGRR. The chain crosses the membrane as a helical span at residues 406-426; the sequence is ITYLVLMSLRGIFILIAVFVP. Residues 427–432 are Extracellular-facing; the sequence is QEMQTL. The helical transmembrane segment at 433–453 threads the bilayer; the sequence is RIIMATLAEGISSLCVGVSRL. At 454–467 the chain is on the cytoplasmic side; sequence HTNELLPTTLRATA. A helical transmembrane segment spans residues 468-488; that stretch reads VGVIGFFGNSGSFLSPLFMLL. The Extracellular segment spans residues 489-494; the sequence is ATYYAN. Residues 495–515 traverse the membrane as a helical segment; sequence MPWIFYGGFSIFNAFTVFLLP. Residues 516–551 are Cytoplasmic-facing; it reads ETKNQPLPDSTHDVGNDWKESRKGKKEDPIIKVTRF. The interval 523-551 is disordered; the sequence is PDSTHDVGNDWKESRKGKKEDPIIKVTRF. Residues 525 to 545 are compositionally biased toward basic and acidic residues; that stretch reads STHDVGNDWKESRKGKKEDPI.

It belongs to the major facilitator (TC 2.A.1) superfamily. Organic cation transporter (TC 2.A.1.19) family. As to expression, expressed in proximal kidney tubules, and in liver hepatocytes (at protein level).

It localises to the cell membrane. Functionally, does not appear to have transporter activity. In terms of biological role, sodium-independent organic anion transporter which exhibits high specificity for L-carnitine. Can also transport salicylic acid and the drug cimetidine. This chain is Solute carrier family 22 member 27, found in Mus musculus (Mouse).